The following is an 880-amino-acid chain: Interference hedgehog (880 aa).

An N-terminal signal peptide occupies residues 1-20 (MTLLTSSLLLFSLLTSRLEA). Residues 21–703 (IPVLEKSPAH…ETFNMSPMLT (683 aa)) lie on the Extracellular side of the membrane. 4 consecutive Ig-like C2-type domains span residues 45–142 (PGVR…TARL), 132–232 (PLVV…ERIQ), 252–340 (PHLL…YIKV), and 346–432 (PQIV…LQVN). Intrachain disulfides connect Cys68-Cys126, Cys173-Cys220, Cys276-Cys324, and Cys367-Cys414. N-linked (GlcNAc...) asparagine glycosylation is found at Asn102 and Asn209. Residues 426 to 467 (GTLLQVNPKQIQEPRESGGTHRPKPNQGSKQKQMYPPTPPNV) form a disordered region. Fibronectin type-III domains are found at residues 461 to 567 (PPTP…LQPG) and 575 to 670 (VPEL…TQRP). The N-linked (GlcNAc...) asparagine glycan is linked to Asn466. Heparin is bound by residues Arg497, Lys501, Lys503, and Arg541. An N-linked (GlcNAc...) asparagine glycan is attached at Asn557. The interval 662 to 697 (LKQGRTQRPKTSTTEEPTLQMGDRDTTTPSHNETFN) is disordered. Composition is skewed to polar residues over residues 665 to 678 (GRTQ…TEEP) and 688 to 697 (TTPSHNETFN). An N-linked (GlcNAc...) asparagine glycan is attached at Asn693. Residues 704-724 (GTIGGGAVLILLLISTCLCVC) form a helical membrane-spanning segment. Residues 725-880 (RRRTSRSRGN…SSGSLNSVGV (156 aa)) lie on the Cytoplasmic side of the membrane. Disordered regions lie at residues 728–762 (TSRS…QRQR) and 775–880 (QQQQ…SVGV). Composition is skewed to low complexity over residues 823-837 (RAGG…NNNN) and 864-880 (SSRS…SVGV).

It belongs to the immunoglobulin superfamily. IHOG family. Homodimer. Heterotetramer; 2 iHog chains bind 2 hh chains when facilitated by heparin, heparin is required to promote high-affinity interactions between hh and iHog.

It is found in the membrane. Its function is as follows. Mediates response to the active Hedgehog (Hh) protein signal in embryos, functioning upstream or at the level of patched (ptc). This is Interference hedgehog from Drosophila sechellia (Fruit fly).